Reading from the N-terminus, the 540-residue chain is CTP synthase (540 aa).

Residues 1-270 (MNNLTSTKFI…DTQILKHFNI (270 aa)) are amidoligase domain. Residue Ser18 participates in CTP binding. UTP is bound at residue Ser18. Residues 19–24 (SLGKGL) and Asp76 each bind ATP. 2 residues coordinate Mg(2+): Asp76 and Glu144. Residues 151 to 153 (DIE), 191 to 196 (KTKPTQ), and Lys227 each bind CTP. Residues 191–196 (KTKPTQ) and Lys227 contribute to the UTP site. The 243-residue stretch at 295–537 (TIAIIGKYIK…VQASLNYQET (243 aa)) folds into the Glutamine amidotransferase type-1 domain. Gly356 is a binding site for L-glutamine. Cys383 acts as the Nucleophile; for glutamine hydrolysis in catalysis. L-glutamine-binding positions include 384–387 (MGMQ), Glu407, and Arg462. Residues His510 and Glu512 contribute to the active site.

This sequence belongs to the CTP synthase family. As to quaternary structure, homotetramer.

It catalyses the reaction UTP + L-glutamine + ATP + H2O = CTP + L-glutamate + ADP + phosphate + 2 H(+). It carries out the reaction L-glutamine + H2O = L-glutamate + NH4(+). The enzyme catalyses UTP + NH4(+) + ATP = CTP + ADP + phosphate + 2 H(+). Its pathway is pyrimidine metabolism; CTP biosynthesis via de novo pathway; CTP from UDP: step 2/2. With respect to regulation, allosterically activated by GTP, when glutamine is the substrate; GTP has no effect on the reaction when ammonia is the substrate. The allosteric effector GTP functions by stabilizing the protein conformation that binds the tetrahedral intermediate(s) formed during glutamine hydrolysis. Inhibited by the product CTP, via allosteric rather than competitive inhibition. Catalyzes the ATP-dependent amination of UTP to CTP with either L-glutamine or ammonia as the source of nitrogen. Regulates intracellular CTP levels through interactions with the four ribonucleotide triphosphates. The chain is CTP synthase from Ehrlichia ruminantium (strain Welgevonden).